The sequence spans 491 residues: Beta-galactosidase (491 aa).

Glu209 (proton donor) is an active-site residue. Glu389 (nucleophile) is an active-site residue.

It belongs to the glycosyl hydrolase 1 family.

The catalysed reaction is Hydrolysis of terminal non-reducing beta-D-galactose residues in beta-D-galactosides.. The sequence is that of Beta-galactosidase (bgaS) from Sulfolobus acidocaldarius (strain ATCC 33909 / DSM 639 / JCM 8929 / NBRC 15157 / NCIMB 11770).